A 502-amino-acid chain; its full sequence is MKIFLVFLSVFFFNGCFGLVYKTPISSSPISYDPYTTPIGSLYAEKLKENPNHSAAILLEDGFDALLHRVGLIRMSQKSIDMQTYIYKNDLSSQVIAKELLNAANRGVKVRILLDDNGLDSDFSDIMLLNFHKNIEVKIFNPYYIRNKGLRYFEMLADYERIKKRMHNKLFIVDNFAVIIGGRNIGDNYFDNDLDTNFLDLDALFFGGVASKAKESFERYWRFHRSIPVSLLRTHKRLKNNAKEIAKLHEKIPISAEDKNQFEKKVNDFIDRFQKYQYPIYYGNAIFLADSPKKIDTPLYSPIKIAFEKALKNAKDSVFIASSYFIPGKKMMKIFKNQISKGIELNILTNSLSSTDAIVVYGAWERYRNQLVRMGANVYEIRNDFFNRQIKGRFSTKHSLHGKTIVFDDNLTLLGSFNIDPRSAYINTESAVLFDNPSFAKRVRLSLKDHAQQSWHLVVYRHRVIWEAVEEGILIHEKTSPDTSFFLRLIKEWSKVLPEREL.

The helical transmembrane segment at 1–21 threads the bilayer; sequence MKIFLVFLSVFFFNGCFGLVY. PLD phosphodiesterase domains follow at residues 162-189 and 396-423; these read IKKR…GDNY and TKHS…DPRS.

It belongs to the phospholipase D family. Cardiolipin synthase subfamily.

The protein resides in the cell membrane. This is an uncharacterized protein from Helicobacter pylori (strain ATCC 700392 / 26695) (Campylobacter pylori).